The chain runs to 88 residues: Small ribosomal subunit protein uS17 (88 aa).

This sequence belongs to the universal ribosomal protein uS17 family. In terms of assembly, part of the 30S ribosomal subunit.

One of the primary rRNA binding proteins, it binds specifically to the 5'-end of 16S ribosomal RNA. This Pseudomonas putida (strain ATCC 700007 / DSM 6899 / JCM 31910 / BCRC 17059 / LMG 24140 / F1) protein is Small ribosomal subunit protein uS17.